The chain runs to 555 residues: MATDTSQGELVHPKALPLIVGAQLIHADKLGEKVEDNTMPIRRAVNSTRETPPKSKLAEGVEEKPEPDVSSEESISTVEEQENETPPATSSETEQPKGQPENEEKEENKPSEETKKDEKDQSKEKEKKVKKTIPSWATLSASQLARAQKQTPMASSPRPKMDAILTEAIKACFQKSGASVVAIRKYIIHKYPSLELERRGYLLKQALKRELNRGVIKQVKGKGASGSFVVVQKSRKPPQKSRNRKNRSSAVDPEPQVKLEDILPLAFTRLCEPKEASYSLIRKYVSQYYPKLRVDIRPQLLKNALQRAVERGQLEQITGKGASGTFQLKKSGEKPLLGGSLMEYAILSAIAAMNEPKTCSTTALKKYVLENHPGTNSNYQMHLLKKTLQRCEKNGWMEQISGKGFSGTFQLCFPYYPSPGVLFPKKEPDDSKDEDEDEDEDDSSEEDSEDEEPPPKRRLQKKTPVKSPGKAAAMKQRGSKLAPKVPAAQRGKTRPLPKKAPPKAKSPAKKARPSPSVIKKPSGSSSKKPAASVRKEVKLPGKGKSTMKKSFKAKK.

An N-acetylalanine modification is found at Ala-2. Residue Ser-6 is modified to Phosphoserine. The interval 29–134 (KLGEKVEDNT…KEKKVKKTIP (106 aa)) is disordered. A Phosphothreonine modification is found at Thr-51. Residues 51–67 (TPPKSKLAEGVEEKPEP) show a composition bias toward basic and acidic residues. Lys-64 is covalently cross-linked (Glycyl lysine isopeptide (Lys-Gly) (interchain with G-Cter in SUMO2)). Thr-85 carries the post-translational modification Phosphothreonine. Lys-97 participates in a covalent cross-link: Glycyl lysine isopeptide (Lys-Gly) (interchain with G-Cter in SUMO2). Over residues 100 to 127 (PENEEKEENKPSEETKKDEKDQSKEKEK) the composition is skewed to basic and acidic residues. Phosphoserine is present on residues Ser-142, Ser-155, and Ser-156. Positions 157-232 (PRPKMDAILT…GASGSFVVVQ (76 aa)) constitute an H15 1 domain. Residue Lys-190 is modified to N6-acetyllysine. Positions 227–254 (SFVVVQKSRKPPQKSRNRKNRSSAVDPE) are disordered. The span at 233–247 (KSRKPPQKSRNRKNR) shows a compositional bias: basic residues. 2 positions are modified to phosphoserine: Ser-248 and Ser-249. H15 domains lie at 255–330 (PQVK…QLKK) and 337–413 (LGGS…QLCF). Lys-258 is covalently cross-linked (Glycyl lysine isopeptide (Lys-Gly) (interchain with G-Cter in SUMO2)). The segment at 422-555 (LFPKKEPDDS…TMKKSFKAKK (134 aa)) is disordered. The span at 430 to 452 (DSKDEDEDEDEDDSSEEDSEDEE) shows a compositional bias: acidic residues. Residues Ser-443, Ser-444, and Ser-448 each carry the phosphoserine modification. Positions 491 to 512 (GKTRPLPKKAPPKAKSPAKKAR) are enriched in basic residues. Residues 513 to 532 (PSPSVIKKPSGSSSKKPAAS) are compositionally biased toward low complexity. The segment covering 545–555 (STMKKSFKAKK) has biased composition (basic residues).

In terms of assembly, interacts (via PxVxL motif) with CBX5.

It localises to the nucleus. It is found in the chromosome. In terms of biological role, component of heterochromatin that maintains heterochromatin integrity during G1/S progression and regulates the duration of G1 phase to critically influence cell proliferative capacity. May play a role in hypoxia-induced oncogenesis. The polypeptide is Heterochromatin protein 1-binding protein 3 (HP1BP3) (Bos taurus (Bovine)).